The primary structure comprises 233 residues: Ribosome maturation factor RimM (233 aa).

A disordered region spans residues 1–51 (MKRKQDSKGAGSRGQGAGEKKQGAGGRGQGEKKQKKSPVPSPQSPVPDPDE). A compositionally biased stretch (gly residues) spans 11–28 (GSRGQGAGEKKQGAGGRG). One can recognise a PRC barrel domain in the interval 145-226 (GEDEYHVVDL…RIEITPPPGL (82 aa)).

The protein belongs to the RimM family. As to quaternary structure, binds ribosomal protein uS19.

It is found in the cytoplasm. Its function is as follows. An accessory protein needed during the final step in the assembly of 30S ribosomal subunit, possibly for assembly of the head region. Essential for efficient processing of 16S rRNA. May be needed both before and after RbfA during the maturation of 16S rRNA. It has affinity for free ribosomal 30S subunits but not for 70S ribosomes. In Trichormus variabilis (strain ATCC 29413 / PCC 7937) (Anabaena variabilis), this protein is Ribosome maturation factor RimM.